The sequence spans 706 residues: G2/M phase-specific E3 ubiquitin-protein ligase (706 aa).

A C2HC pre-PHD-type zinc finger spans residues 11–51; the sequence is NLACVFCRKNDDCPNKYGEKKTKEKWNLTVHYYCLLMSSGI. The PHD-type 1 zinc finger occupies 79–128; sequence LKCCVCKKNGASIGCVAPRCKRSYHFPCGLQRECIFQFTGNFASFCWNHR. The PHD-type 2; degenerate zinc-finger motif lies at 143-193; the sequence is PCTICLEFIEPIPSYNILRSPCCKNAWFHRDCLQVQAINAGVFFFRCTICS. The PHD-type 3 zinc finger occupies 237–286; the sequence is RCRCKEGRDYNAPDSKWEIKRCQCCGSSGTHLACSSLRSWEQNWECLECR. Positions 371 to 698 constitute an HECT domain; sequence IWTSALDAFR…IRNTLKLEKE (328 aa).

Its subcellular location is the nucleus. It localises to the nucleolus. The protein resides in the cytoplasm. The catalysed reaction is S-ubiquitinyl-[E2 ubiquitin-conjugating enzyme]-L-cysteine + [acceptor protein]-L-lysine = [E2 ubiquitin-conjugating enzyme]-L-cysteine + N(6)-ubiquitinyl-[acceptor protein]-L-lysine.. It functions in the pathway protein modification; protein ubiquitination. Functionally, E3 ubiquitin-protein ligase which accepts ubiquitin from an E2 ubiquitin-conjugating enzyme in the form of a thioester and then directly transfers the ubiquitin to targeted substrates. Essential in early embryonic development to prevent apoptotic death. This is G2/M phase-specific E3 ubiquitin-protein ligase (G2E3) from Macaca fascicularis (Crab-eating macaque).